We begin with the raw amino-acid sequence, 878 residues long: Protein daughter of sevenless (878 aa).

The PH domain occupies 3–113 (RTFYEGWLIK…WVNCICQVCH (111 aa)). The segment at 132 to 176 (ENRTQHTSSSGGLSNSTQNTTTTSLHSSAGTTAPQASVPNAGGSA) is disordered. Positions 136–159 (QHTSSSGGLSNSTQNTTTTSLHSS) are enriched in low complexity. Over residues 160 to 169 (AGTTAPQASV) the composition is skewed to polar residues. The stretch at 246 to 275 (ALIQAQAAAAAAEQLQQQQQQAARLAVSAN) forms a coiled coil. The tract at residues 391 to 437 (NNNASKQRSDSDSESVFTDDDEWAHPLPLRENVDRSTRPSDSSIENE) is disordered. Serine 399 bears the Phosphoserine mark. At threonine 481 the chain carries Phosphothreonine. 2 interaction with DRK regions span residues 638-650 (DCPP…KPKV) and 690-702 (GPPS…KPNA). Disordered stretches follow at residues 686 to 721 (QQPI…SSGA) and 749 to 773 (LPRQ…RTAS). Polar residues-rich tracts occupy residues 707–718 (NSATMSPATRRS) and 760–770 (SPGSMSVQHQR). At threonine 771 the chain carries Phosphothreonine. Phosphotyrosine occurs at positions 801 and 854.

Interacts with DRK. In terms of processing, phosphorylated on Tyr-801 and Tyr-854 in response to sevenless activation, which initiates the recruitment of the phosphatase CSW.

It localises to the cytoplasm. Its subcellular location is the membrane. In terms of biological role, essential component for signaling from various receptor tyrosine kinases such as Sevenless, TORSO and DER. Required for photoreceptor cell and wing development. The polypeptide is Protein daughter of sevenless (dos) (Drosophila melanogaster (Fruit fly)).